A 1721-amino-acid polypeptide reads, in one-letter code: MSSTSTTSSPEAIKKLLDNMQSDLRGLSMECKKKFPPVKEAAESGIVKVKNIAARSPDVLTALKENSSEVVQPFLMGCGTKEQKITQLCLAAIQRLMSHEVVSEGAAGNIINMLWQLMENGLEELKLLQTVLVLLTTNTVVHDESLSKAIVLCFRLHFTKDNITNNTAAATVRQVVTVVFERMVTEDERHKDAVEQPIPVTGNSNRRSVSTLKPCAKDAYMLFQDLCQLVNADAPYWLVGMTEMTRTFGLELLESVLNDFPQVFLQHQEFSFLLKERVCPLVIKLFSPNIKFRQGSNSNSSPAPVEKPYFPICMRLLRVVSVLIKQFYSLLVTECEIFLSLLVKFLDADKPQWLRAVAVESIHRLCVQPQLLRSFCQSYDMKQHSTKVFRDIVNALGSFIQSLFLIPSAGPASATTNPPGGSSSITPASNPTTSGMATATSNTTVLPAFEYRGTWIPILTISIQGSAKATYLEMLDKVEPPTIPEGYALSVAFHCLLDLVRGITTMIEGEIGQAETDSHISAEETPSHAPTINPQELPAVSDPADKGCRSVWEEMINACWCGLLAALSLLLDASTDETATENILKAEMTMASLCGKLGLVTPRDAFITAICKGSLPPHYALTVLNTSSAAICNKSYSIQGQNVQMISPSSDSHQQVVAVGQPLAVQPQGTVMLTAKNIQCMRTLLNLAHCHGGFLGTSWQLVLATLQHLVWILGLKPSSGGALKPGRAVEGPSTVLTTAVMTDLPIISNILSRLFESSQYLDDVSLHHLINALCSLSLEAMDMAYGNNKEPSLFAVAKLLETGLVNMHRIEILWRPLTGHLIEVCQHPNARMREWGAEALTSLIKAGLDFKHEPQLSENQRLQLLLLNPLKELSNIIHHDIRLKQLECVLQILQSQGDSLGPGWPLVLGVIGAIRNDQGESLIRNAFQCLQLVVTDFLPTMPSTCLQIVVEVAGSFGLQNQELNISLTSIGLLWNISDYFYQRGETIEKELNLEEDLLQKQAKEKGIILNRPFHPAPPFDCLWLCLYAKLGELCVDIRPAVRKSAGQTLFSTIGAHGTLLQHATWHTVIWKVLFQLLNQVRESSTTADKEKIESGGGNILIHHSRDTAEKQWAETWVLTLAGVARIFNTRRYLLQPLGEFTKAWDVLLDHIQSAALSKSNEVSLAALKSFQEILQIVSPTRDNDKPESLPGISAPVPVLIGPVNASGPGRPLVRSDSTGERLSRYSIPEQPIAVDEIEDSALWWAAWNTWYRIGTESTKPPISCDKLTFIPSQPFLTALIQIFPALYQHIKTAFSMDDLQKLGVILHGAVSVPISSDASPFILPSYTEAVLTSLQESVLTALDVLQKEICVGPENMQIMYPAIFDELSAFVQFSCKPPQYGKLETKHIANAKYNQIQLFAPAEWVALNYVPFAEKSLEVMVDLYQKTACHKAVVNEKVLQNVIKTLRVPLSLKYACPSESTWKLAVSSLLKVLSVGLPVARQHVSSGKFDSMWPELASTFEDFLFTKSTPPDNLSIEEFQRNEGIDVEVVQLISMEILPYANFIPKDFVGKIMTMLNKGSIHSQSSSFTEAEIDIRMREEFSKVCFETLLQFSFSNKVTTPQEGYISRMALSVLLKRSQDVLHRYIEDEKLSGKCPLPRQRVTEIIFVLKAVSTLIDSLKKTHPENVDANTWAQVISLYPTLVECITCSSSEVCTALKEALVPFKDFMHPPAAAKVQNGES.

Disordered stretches follow at residues 414–439 (ATTNPPGGSSSITPASNPTTSGMATA) and 516–539 (TDSHISAEETPSHAPTINPQELPA). Basic and acidic residues predominate over residues 516–526 (TDSHISAEETP).

It belongs to the MON2 family.

May be required for traffic between late Golgi and early endosomes. This chain is Protein MON2 homolog (mon2), found in Xenopus laevis (African clawed frog).